The chain runs to 211 residues: Protein-methionine-sulfoxide reductase heme-binding subunit MsrQ (211 aa).

The next 4 membrane-spanning stretches (helical) occupy residues 10–30, 82–102, 116–136, and 153–173; these read WLKV…VWAI, LWCF…ELGV, PYLT…FTST, and FVYL…KIIS.

It belongs to the MsrQ family. Heterodimer of a catalytic subunit (MsrP) and a heme-binding subunit (MsrQ). FMN serves as cofactor. It depends on heme b as a cofactor.

The protein localises to the cell inner membrane. Part of the MsrPQ system that repairs oxidized periplasmic proteins containing methionine sulfoxide residues (Met-O), using respiratory chain electrons. Thus protects these proteins from oxidative-stress damage caused by reactive species of oxygen and chlorine generated by the host defense mechanisms. MsrPQ is essential for the maintenance of envelope integrity under bleach stress, rescuing a wide series of structurally unrelated periplasmic proteins from methionine oxidation, including the primary periplasmic chaperone SurA and the lipoprotein Pal. MsrQ provides electrons for reduction to the reductase catalytic subunit MsrP, using the quinone pool of the respiratory chain. The protein is Protein-methionine-sulfoxide reductase heme-binding subunit MsrQ of Escherichia coli O157:H7.